The primary structure comprises 146 residues: Hemoglobin subunit beta (146 aa).

Valine 1 carries the post-translational modification N-acetylvaline. A Globin domain is found at 2-146 (HLSGEEKACV…VANALAHKYH (145 aa)). Threonine 12 is subject to Phosphothreonine. Serine 44 is modified (phosphoserine). An N6-acetyllysine modification is found at lysine 59. Position 63 (histidine 63) interacts with heme b. Lysine 82 carries the post-translational modification N6-acetyllysine. Histidine 92 is a heme b binding site. Cysteine 93 is modified (S-nitrosocysteine). Lysine 144 carries the N6-acetyllysine modification.

This sequence belongs to the globin family. As to quaternary structure, heterotetramer of two alpha chains and two beta chains. As to expression, red blood cells.

Functionally, involved in oxygen transport from the lung to the various peripheral tissues. The protein is Hemoglobin subunit beta (HBB) of Suncus murinus (Asian house shrew).